A 212-amino-acid polypeptide reads, in one-letter code: uncharacterized protein (212 aa).

This is an uncharacterized protein from Saccharolobus islandicus (Sulfolobus islandicus).